Reading from the N-terminus, the 99-residue chain is MVERLSAEARTDALRKLSGWSELDGRDAISRSFTFRDFNEAFGFMTRVALVAEKRDHHPEWRNVYRTVDVVLSTHDAGGVTLLDVELAEAMDAIAASMA.

Belongs to the pterin-4-alpha-carbinolamine dehydratase family.

The catalysed reaction is (4aS,6R)-4a-hydroxy-L-erythro-5,6,7,8-tetrahydrobiopterin = (6R)-L-erythro-6,7-dihydrobiopterin + H2O. This chain is Putative pterin-4-alpha-carbinolamine dehydratase, found in Bradyrhizobium sp. (strain BTAi1 / ATCC BAA-1182).